The primary structure comprises 587 residues: 5-aminolevulinate synthase, erythroid-specific, mitochondrial (587 aa).

The transit peptide at 1–49 (MVTAAMLLQCCPVPARGPTSLLGKVVKTHQFLFGIGRCPILATQGPNCS) directs the protein to the mitochondrion. A succinyl-CoA-binding site is contributed by Arg163. Positions 258 and 259 each coordinate pyridoxal 5'-phosphate. Ser280 and Lys299 together coordinate succinyl-CoA. Ser332, His360, and Thr388 together coordinate pyridoxal 5'-phosphate. Residue Lys391 is part of the active site. Lys391 is subject to N6-(pyridoxal phosphate)lysine. Pyridoxal 5'-phosphate is bound by residues Thr420 and Thr421. Thr508 contacts succinyl-CoA.

Belongs to the class-II pyridoxal-phosphate-dependent aminotransferase family. As to quaternary structure, homodimer. Interacts with SUCLA2. It depends on pyridoxal 5'-phosphate as a cofactor.

It is found in the mitochondrion inner membrane. It carries out the reaction succinyl-CoA + glycine + H(+) = 5-aminolevulinate + CO2 + CoA. It participates in porphyrin-containing compound metabolism; protoporphyrin-IX biosynthesis; 5-aminolevulinate from glycine: step 1/1. In terms of biological role, catalyzes the pyridoxal 5'-phosphate (PLP)-dependent condensation of succinyl-CoA and glycine to form aminolevulinic acid (ALA), with CoA and CO2 as by-products. Contributes significantly to heme formation during erythropoiesis. The sequence is that of 5-aminolevulinate synthase, erythroid-specific, mitochondrial (ALAS2) from Pongo abelii (Sumatran orangutan).